The following is a 241-amino-acid chain: Interleukin-6 (241 aa).

Residues 1–25 (MNFTEGCEATGRRPGSAGSRRRRAP) form a disordered region. A signal peptide spans 1–46 (MNFTEGCEATGRRPGSAGSRRRRAPRPGPVALLPLLLPLLLPPAAA). A disulfide bond links Cys122 and Cys132.

This sequence belongs to the IL-6 superfamily. Component of a hexamer of two molecules each of IL6, IL6R and IL6ST; first binds to IL6R to associate with the signaling subunit IL6ST.

Its subcellular location is the secreted. Functionally, cytokine with a wide variety of biological functions in immunity, tissue regeneration, and metabolism. Binds to IL6R, then the complex associates to the signaling subunit IL6ST/gp130 to trigger the intracellular IL6-signaling pathway. The interaction with the membrane-bound IL6R and IL6ST stimulates 'classic signaling', whereas the binding of IL6 and soluble IL6R to IL6ST stimulates 'trans-signaling'. Alternatively, 'cluster signaling' occurs when membrane-bound IL6:IL6R complexes on transmitter cells activate IL6ST receptors on neighboring receiver cells. The sequence is that of Interleukin-6 (IL6) from Gallus gallus (Chicken).